The sequence spans 122 residues: Ribosome-binding factor A (122 aa).

The protein belongs to the RbfA family. As to quaternary structure, monomer. Binds 30S ribosomal subunits, but not 50S ribosomal subunits or 70S ribosomes.

Its subcellular location is the cytoplasm. One of several proteins that assist in the late maturation steps of the functional core of the 30S ribosomal subunit. Associates with free 30S ribosomal subunits (but not with 30S subunits that are part of 70S ribosomes or polysomes). Required for efficient processing of 16S rRNA. May interact with the 5'-terminal helix region of 16S rRNA. The chain is Ribosome-binding factor A from Pelagibacter ubique (strain HTCC1062).